Consider the following 470-residue polypeptide: Zinc finger CCCH domain-containing protein 7 (470 aa).

The tract at residues 122–144 is disordered; sequence AYSKKESEKQSGQNNTSTASRNH. The span at 131-142 shows a compositional bias: polar residues; it reads QSGQNNTSTASR. C3H1-type zinc fingers lie at residues 240 to 269, 273 to 294, 295 to 321, 322 to 349, and 350 to 372; these read AKKK…HDPS, VCTK…HKVI, PERM…HVHV, NPIA…HSYN, and CPVF…HPKN. Over residues 370 to 381 the composition is skewed to basic residues; it reads PKNQSKGRKRKR. The disordered stretch occupies residues 370–389; it reads PKNQSKGRKRKRTNEPSQKN.

Its function is as follows. Possesses RNA-binding and ribonuclease activities in vitro. The polypeptide is Zinc finger CCCH domain-containing protein 7 (Arabidopsis thaliana (Mouse-ear cress)).